The chain runs to 398 residues: NADH-ubiquinone oxidoreductase 49 kDa subunit (398 aa).

Belongs to the complex I 49 kDa subunit family.

It localises to the mitochondrion. The catalysed reaction is a ubiquinone + NADH + 5 H(+)(in) = a ubiquinol + NAD(+) + 4 H(+)(out). In terms of biological role, core subunit of the mitochondrial membrane respiratory chain NADH dehydrogenase (Complex I) that is believed to belong to the minimal assembly required for catalysis. Complex I functions in the transfer of electrons from NADH to the respiratory chain. The immediate electron acceptor for the enzyme is believed to be ubiquinone. Component of the iron-sulfur (IP) fragment of the enzyme. Component of the iron-sulfur (IP) fragment of the enzyme. In Pylaiella littoralis (Seaweed), this protein is NADH-ubiquinone oxidoreductase 49 kDa subunit (NAD7).